A 586-amino-acid polypeptide reads, in one-letter code: MKWVNKGTVERVKQEFKDEVKYYETKHTKGFEVSHDFLKPLLKFLKERERFLHFVDMTCIDFPEHPNRFQGVYILYNPEENERVIVKSWAKDGKLPTVEDLWPGAKWAEREAYDMFGVVFEGHENLRRMFMWEGYEHYPLRKDFPLQGIPEVELPSLTEVLHGRTDPPSHDFELVHTKLPTLEDLERTEKARLKKKAELVLNWGPLHPGTHGTIWFLFDLEGEKVVQSDVILGQLHRGMEKLAENLHYFQFIPYTDRMDYISAICNELAYVETVERLLGVEVPEKARYIRTMFAELQRINSHLLWLGTGALDLGALTVFLYAFREREKIMDIIEGNAGYRLTSCFLRIGGVHYDLAEGTLDVVKHFIKDFPNRLKEYHTLLTRNRIWLRRTKDVGVITREDVHNYGLSGPVARGSGVPYDLRKLQPYAAYDEVEFDIPVGEVGDVYDRYLVRMEEMAQSVRIIEQCVQKLEKLPKDAPYLNKEHPAVIPPKEDVFHDLESMVKSFRVVVHGEDAPPGEVYFAGENPRGELGFFIYSKGGGKPYRTRIRSGALYNLSIFPKLIQGRTIADAIALLGSLDPVVGETDR.

Residues 1-173 (MKWVNKGTVE…RTDPPSHDFE (173 aa)) are NADH dehydrogenase I subunit C. The tract at residues 197–586 (AELVLNWGPL…LDPVVGETDR (390 aa)) is NADH dehydrogenase I subunit D.

It in the N-terminal section; belongs to the complex I 30 kDa subunit family. This sequence in the C-terminal section; belongs to the complex I 49 kDa subunit family. NDH-1 is composed of 13 different subunits. Subunits NuoB, CD, E, F, and G constitute the peripheral sector of the complex.

The protein localises to the cell inner membrane. It catalyses the reaction a quinone + NADH + 5 H(+)(in) = a quinol + NAD(+) + 4 H(+)(out). NDH-1 shuttles electrons from NADH, via FMN and iron-sulfur (Fe-S) centers, to quinones in the respiratory chain. The immediate electron acceptor for the enzyme in this species is believed to be ubiquinone. Couples the redox reaction to proton translocation (for every two electrons transferred, four hydrogen ions are translocated across the cytoplasmic membrane), and thus conserves the redox energy in a proton gradient. This chain is NADH-quinone oxidoreductase subunit C/D 2 (nuoC2), found in Aquifex aeolicus (strain VF5).